The chain runs to 229 residues: Potassium/proton antiporter CemA (229 aa).

Helical transmembrane passes span 7-27 (FTPLLYFASIVFLPWWISLSF), 114-134 (IISFVILSGYSIFGNEELVIL), and 190-210 (ISGLVSTFPVILDTLLKYWIF).

The protein belongs to the CemA family.

It is found in the plastid. Its subcellular location is the chloroplast inner membrane. The catalysed reaction is K(+)(in) + H(+)(out) = K(+)(out) + H(+)(in). In terms of biological role, contributes to K(+)/H(+) antiport activity by supporting proton efflux to control proton extrusion and homeostasis in chloroplasts in a light-dependent manner to modulate photosynthesis. Prevents excessive induction of non-photochemical quenching (NPQ) under continuous-light conditions. Indirectly promotes efficient inorganic carbon uptake into chloroplasts. This chain is Potassium/proton antiporter CemA, found in Jasminum nudiflorum (Winter jasmine).